A 231-amino-acid chain; its full sequence is tRNA (guanine-N(1)-)-methyltransferase (231 aa).

Residues glycine 112 and 132-137 contribute to the S-adenosyl-L-methionine site; that span reads IGDYIL.

This sequence belongs to the RNA methyltransferase TrmD family. As to quaternary structure, homodimer.

The protein localises to the cytoplasm. It carries out the reaction guanosine(37) in tRNA + S-adenosyl-L-methionine = N(1)-methylguanosine(37) in tRNA + S-adenosyl-L-homocysteine + H(+). Its function is as follows. Specifically methylates guanosine-37 in various tRNAs. The sequence is that of tRNA (guanine-N(1)-)-methyltransferase from Sulfurimonas denitrificans (strain ATCC 33889 / DSM 1251) (Thiomicrospira denitrificans (strain ATCC 33889 / DSM 1251)).